The sequence spans 703 residues: DNA ligase (703 aa).

Positions 1 to 20 (MNDNLDLFSGAAPAAPESGA) are disordered. Residues 9–20 (SGAAPAAPESGA) show a composition bias toward low complexity. NAD(+)-binding positions include 53 to 57 (DGEYD), 102 to 103 (SI), and Glu-139. Catalysis depends on Lys-141, which acts as the N6-AMP-lysine intermediate. 4 residues coordinate NAD(+): Arg-162, Glu-200, Lys-321, and Lys-345. The Zn(2+) site is built by Cys-439, Cys-442, Cys-457, and Cys-463. Positions 622-703 (QTAQPLAGMT…MLALLAGGDR (82 aa)) constitute a BRCT domain.

This sequence belongs to the NAD-dependent DNA ligase family. LigA subfamily. Requires Mg(2+) as cofactor. The cofactor is Mn(2+).

It carries out the reaction NAD(+) + (deoxyribonucleotide)n-3'-hydroxyl + 5'-phospho-(deoxyribonucleotide)m = (deoxyribonucleotide)n+m + AMP + beta-nicotinamide D-nucleotide.. Functionally, DNA ligase that catalyzes the formation of phosphodiester linkages between 5'-phosphoryl and 3'-hydroxyl groups in double-stranded DNA using NAD as a coenzyme and as the energy source for the reaction. It is essential for DNA replication and repair of damaged DNA. This chain is DNA ligase, found in Delftia acidovorans (strain DSM 14801 / SPH-1).